A 174-amino-acid chain; its full sequence is uncharacterized protein (174 aa).

This is an uncharacterized protein from Rickettsia conorii (strain ATCC VR-613 / Malish 7).